We begin with the raw amino-acid sequence, 153 residues long: UPF0756 membrane protein lmo1568 (153 aa).

4 consecutive transmembrane segments (helical) span residues 6–26 (MLFL…SLII), 54–74 (WGVT…QIGF), 80–100 (SFKS…SILA), and 117–137 (LVFG…GPVI).

It belongs to the UPF0756 family.

It localises to the cell membrane. In Listeria monocytogenes serovar 1/2a (strain ATCC BAA-679 / EGD-e), this protein is UPF0756 membrane protein lmo1568.